A 704-amino-acid polypeptide reads, in one-letter code: Polyribonucleotide nucleotidyltransferase (704 aa).

Mg(2+)-binding residues include Asp485 and Asp491. The KH domain occupies Pro552–Ile611. Positions Gly621–Lys689 constitute an S1 motif domain.

It belongs to the polyribonucleotide nucleotidyltransferase family. Mg(2+) is required as a cofactor.

The protein resides in the cytoplasm. It catalyses the reaction RNA(n+1) + phosphate = RNA(n) + a ribonucleoside 5'-diphosphate. Its function is as follows. Involved in mRNA degradation. Catalyzes the phosphorolysis of single-stranded polyribonucleotides processively in the 3'- to 5'-direction. The chain is Polyribonucleotide nucleotidyltransferase from Halalkalibacterium halodurans (strain ATCC BAA-125 / DSM 18197 / FERM 7344 / JCM 9153 / C-125) (Bacillus halodurans).